Here is a 239-residue protein sequence, read N- to C-terminus: tRNA (guanine-N(1)-)-methyltransferase (239 aa).

Residues Gly-108 and 127-132 (LGDFVL) each bind S-adenosyl-L-methionine.

The protein belongs to the RNA methyltransferase TrmD family. Homodimer.

It localises to the cytoplasm. It carries out the reaction guanosine(37) in tRNA + S-adenosyl-L-methionine = N(1)-methylguanosine(37) in tRNA + S-adenosyl-L-homocysteine + H(+). Its function is as follows. Specifically methylates guanosine-37 in various tRNAs. The sequence is that of tRNA (guanine-N(1)-)-methyltransferase from Streptococcus pyogenes serotype M6 (strain ATCC BAA-946 / MGAS10394).